The following is a 256-amino-acid chain: DNA repair protein RecO (256 aa).

It belongs to the RecO family.

Functionally, involved in DNA repair and RecF pathway recombination. This chain is DNA repair protein RecO, found in Streptococcus pneumoniae serotype 19F (strain G54).